The primary structure comprises 146 residues: MQVILLEPSRLGKTGEVVSVKDGYARNWLIPQGLAVSATRTNMKTLEAQLRSIEKRQAQEKAVAEDLASRLNGVAVELSVRAGEGKIYGAVTHQDVANSLDQLGFDVDRRKIDMPKTVKEVGEYDIAYRAHPEVTIPMKLVVHAAK.

It belongs to the bacterial ribosomal protein bL9 family. As to quaternary structure, part of the 50S ribosomal subunit. Contacts protein L31.

Functionally, binds to the 23S rRNA and protein L31. This chain is Large ribosomal subunit protein bL9 (rplI), found in Deinococcus radiodurans (strain ATCC 13939 / DSM 20539 / JCM 16871 / CCUG 27074 / LMG 4051 / NBRC 15346 / NCIMB 9279 / VKM B-1422 / R1).